Reading from the N-terminus, the 359-residue chain is MGRKFQNKKKKAAPQLEIVPLDENPPLPPQRSSDDVVPKKARKEKWVNKQRVLVFSARGISHRDRHLMKDIKTLMPHHRPESKMERSKTLSVVNEMCEMKHCNKAMLFEGRRKRDLYMWISNTSGSTGPSAKFLIENIHTMAELKMTGNCLRGSRPLLSFDSKFDELPHLKLLKELFVQTYSVPNHHPKSQPFVDHVFTFTYLDKRIWFRNFQILSEDGGLSEVGPRYVMNPVKIFDGSFTGKTIWENPDYVSPSKQRQVLKKAAKDKYVNRVEQKVKHEATRPIRAYDGMDNDELFEDDDPVETAKILAAIAKKKKEEAAKQTPKSALTKKIKEKQLQAVKDVIERKKARTIKRVKKV.

Basic residues predominate over residues 1–12; it reads MGRKFQNKKKKA. The interval 1–42 is disordered; that stretch reads MGRKFQNKKKKAAPQLEIVPLDENPPLPPQRSSDDVVPKKAR. A Brix domain is found at 50–241; the sequence is QRVLVFSARG…PVKIFDGSFT (192 aa).

This sequence belongs to the BRX1 family.

Its subcellular location is the nucleus. The protein resides in the nucleolus. Its function is as follows. Required for biogenesis of the 60S ribosomal subunit. The polypeptide is Ribosome biogenesis protein BRX1 homolog (Drosophila melanogaster (Fruit fly)).